A 178-amino-acid chain; its full sequence is Large ribosomal subunit protein uL6 (178 aa).

This sequence belongs to the universal ribosomal protein uL6 family. In terms of assembly, part of the 50S ribosomal subunit.

This protein binds to the 23S rRNA, and is important in its secondary structure. It is located near the subunit interface in the base of the L7/L12 stalk, and near the tRNA binding site of the peptidyltransferase center. This Streptococcus pyogenes serotype M3 (strain ATCC BAA-595 / MGAS315) protein is Large ribosomal subunit protein uL6.